Here is a 216-residue protein sequence, read N- to C-terminus: Small ribosomal subunit protein uS3c (216 aa).

The region spanning 43-118 (IKNYIQKNIR…KLNIAIVKIT (76 aa)) is the KH type-2 domain.

Belongs to the universal ribosomal protein uS3 family. In terms of assembly, part of the 30S ribosomal subunit.

The protein localises to the plastid. The protein resides in the chloroplast. In Phaseolus vulgaris (Kidney bean), this protein is Small ribosomal subunit protein uS3c (rps3).